Consider the following 248-residue polypeptide: Ureidoacrylate amidohydrolase RutB (248 aa).

Catalysis depends on Asp-41, which acts as the Proton acceptor. Lys-150 is a catalytic residue. The active-site Nucleophile is the Cys-183.

The protein belongs to the isochorismatase family. RutB subfamily.

The enzyme catalyses (Z)-3-ureidoacrylate + H2O + H(+) = (Z)-3-aminoacrylate + NH4(+) + CO2. The catalysed reaction is (Z)-3-ureidoacrylate + H2O = (Z)-3-aminoacrylate + carbamate + H(+). It carries out the reaction (Z)-2-methylureidoacrylate + H2O + H(+) = (Z)-2-methylaminoacrylate + NH4(+) + CO2. Hydrolyzes ureidoacrylate to form aminoacrylate and carbamate. The carbamate hydrolyzes spontaneously, thereby releasing one of the nitrogen atoms of the pyrimidine ring as ammonia and one of its carbon atoms as CO2. The protein is Ureidoacrylate amidohydrolase RutB of Methylorubrum extorquens (strain ATCC 14718 / DSM 1338 / JCM 2805 / NCIMB 9133 / AM1) (Methylobacterium extorquens).